Reading from the N-terminus, the 460-residue chain is NADH-ubiquinone oxidoreductase chain 4 (460 aa).

13 helical membrane-spanning segments follow: residues 20 to 42 (SKWLWTTTTMNSFLIAFISLTWL), 61 to 81 (PLSTPLLVLTCWLLPLMILAS), 94 to 113 (RMYITLLASLQTFMIMAFGA), 114 to 134 (TKIIMFYIMFEATLIPTLIII), 148 to 168 (TYFLFYTLAGSLPLLVALLLL), 195 to 215 (IWWAGCLIAFLVKMPLYGMHL), 225 to 245 (PVAGSMILAAVLLKLGGYGMM), 258 to 278 (LAYPFIILALWGVIMTGLVCL), 285 to 304 (SLIAYSSVGHMGLVAGGILI), 308 to 330 (WGFTGAIILMIAHGLTSSALFCL), 351 to 371 (MVLPLATVWWFIANLANLALP), 380 to 400 (LMIITALFNWSPWTIIITGMG), and 436 to 456 (LLMTLHLIPIILLMLKPELMW).

This sequence belongs to the complex I subunit 4 family. In terms of assembly, core subunit of respiratory chain NADH dehydrogenase (Complex I) which is composed of 45 different subunits.

Its subcellular location is the mitochondrion inner membrane. The enzyme catalyses a ubiquinone + NADH + 5 H(+)(in) = a ubiquinol + NAD(+) + 4 H(+)(out). In terms of biological role, core subunit of the mitochondrial membrane respiratory chain NADH dehydrogenase (Complex I) which catalyzes electron transfer from NADH through the respiratory chain, using ubiquinone as an electron acceptor. Essential for the catalytic activity and assembly of complex I. The sequence is that of NADH-ubiquinone oxidoreductase chain 4 (mt-nd4) from Danio rerio (Zebrafish).